The chain runs to 221 residues: NADH-ubiquinone oxidoreductase chain 4 (221 aa).

The next 6 helical transmembrane spans lie at 5–25 (YTYI…FSTL), 34–54 (IAYS…SNTI), 61–81 (IALG…AGGI), 100–120 (IMPI…GTPL), 140–160 (ILGV…IFMY), and 185–205 (FIML…PAPI).

This sequence belongs to the complex I subunit 4 family.

Its subcellular location is the mitochondrion membrane. The enzyme catalyses a ubiquinone + NADH + 5 H(+)(in) = a ubiquinol + NAD(+) + 4 H(+)(out). Core subunit of the mitochondrial membrane respiratory chain NADH dehydrogenase (Complex I) that is believed to belong to the minimal assembly required for catalysis. Complex I functions in the transfer of electrons from NADH to the respiratory chain. The immediate electron acceptor for the enzyme is believed to be ubiquinone. The sequence is that of NADH-ubiquinone oxidoreductase chain 4 (nd4) from Emericella nidulans (Aspergillus nidulans).